A 747-amino-acid chain; its full sequence is Probable type III restriction-modification enzyme HindVI Mod subunit (747 aa).

The tract at residues aspartate 267–tyrosine 270 is binding of S-adenosyl methionine.

Belongs to the N(4)/N(6)-methyltransferase family. As to quaternary structure, homodimer, also forms a functional restriction-competent complex with Res.

The enzyme catalyses a 2'-deoxyadenosine in DNA + S-adenosyl-L-methionine = an N(6)-methyl-2'-deoxyadenosine in DNA + S-adenosyl-L-homocysteine + H(+). Functionally, a beta subtype methylase that binds the system-specific DNA recognition site 5'-CGAAT-3' and methylates A-4 (of only 1 strand). DNA restriction requires both the Res and Mod subunits. The sequence is that of Probable type III restriction-modification enzyme HindVI Mod subunit from Haemophilus influenzae (strain ATCC 51907 / DSM 11121 / KW20 / Rd).